Reading from the N-terminus, the 382-residue chain is MTEQRPLTIALVAGETSGDILGAGLIRALKEHVPNARFVGVAGPRMQAEGCEAWYEMEELAVMGIVEVLGRLRRLLHIRADLTKRFGELKPDVFVGIDAPDFNITLEGNLKKQGIKTIHYVSPSVWAWRQKRVFKIGRATDLVLAFLPFEKAFYDKYNVPCRFIGHTMADAMPLDPDKNAARDVLGIPHDAHCLALLPGSRGAEVEMLSADFLKTAQLLRQTYPDLEIVVPLVNAKRREQFERIKAEVAPDLSVHLLDGMGREAMVASDAALLASGTAALECMLAKCPMVVGYRMKPFTFWLAKRLVKTDYVSLPNLLAGRELVKELLQEECEPQKLAAALLPLLANGKTSHAMHDTFRELHQQIRCNADEQAAQAVLELAQ.

It belongs to the LpxB family.

The catalysed reaction is 2-N,3-O-bis[(3R)-3-hydroxytetradecanoyl]-alpha-D-glucosaminyl 1-phosphate + UDP-2-N,3-O-bis[(3R)-3-hydroxytetradecanoyl]-alpha-D-glucosamine = lipid A disaccharide (E. coli) + UDP + H(+). It carries out the reaction a lipid X + a UDP-2-N,3-O-bis[(3R)-3-hydroxyacyl]-alpha-D-glucosamine = a lipid A disaccharide + UDP + H(+). The protein operates within glycolipid biosynthesis; lipid IV(A) biosynthesis; lipid IV(A) from (3R)-3-hydroxytetradecanoyl-[acyl-carrier-protein] and UDP-N-acetyl-alpha-D-glucosamine: step 5/6. Condensation of UDP-2,3-diacylglucosamine and 2,3-diacylglucosamine-1-phosphate to form lipid A disaccharide, a precursor of lipid A, a phosphorylated glycolipid that anchors the lipopolysaccharide to the outer membrane of the cell. In Escherichia coli (strain K12 / MC4100 / BW2952), this protein is Lipid-A-disaccharide synthase.